The chain runs to 57 residues: DNA gyrase inhibitor YacG (57 aa).

Cysteine 10, cysteine 13, cysteine 25, and cysteine 29 together coordinate Zn(2+).

This sequence belongs to the DNA gyrase inhibitor YacG family. As to quaternary structure, interacts with GyrB. The cofactor is Zn(2+).

In terms of biological role, inhibits all the catalytic activities of DNA gyrase by preventing its interaction with DNA. Acts by binding directly to the C-terminal domain of GyrB, which probably disrupts DNA binding by the gyrase. This Brucella melitensis biotype 1 (strain ATCC 23456 / CCUG 17765 / NCTC 10094 / 16M) protein is DNA gyrase inhibitor YacG.